A 297-amino-acid polypeptide reads, in one-letter code: Phosphatidylinositol N-acetylglucosaminyltransferase subunit C (297 aa).

A run of 8 helical transmembrane segments spans residues 51 to 71 (VVFESSVVIQQLCSVCVFVVI), 80 to 100 (LAPHWLLGTGLASSLIGYVLF), 117 to 137 (WADLKSALVFITFTYGFSPVL), 153 to 173 (SVFMLLGHLIFFDYGANAAIV), 174 to 194 (SSTLSLNMAIFASVCLASRLP), 196 to 216 (SLHAFIMVTFAIQIFALWPML), 227 to 244 (SYVGVTLLFAFSAVGGLL), and 250 to 270 (GAVLFALLLMSISCLCPFYLI).

This sequence belongs to the PIGC family. Component of the glycosylphosphatidylinositol-N-acetylglucosaminyltransferase (GPI-GnT) complex composed at least by PIGA, PIGC, PIGH, PIGP, PIGQ, PIGY and DPM2. Interacts with PIGQ. Interacts with the heterodimer PIGA:PIGH.

It localises to the endoplasmic reticulum membrane. It functions in the pathway glycolipid biosynthesis; glycosylphosphatidylinositol-anchor biosynthesis. Its function is as follows. Part of the glycosylphosphatidylinositol-N-acetylglucosaminyltransferase (GPI-GnT) complex that catalyzes the transfer of N-acetylglucosamine from UDP-N-acetylglucosamine to phosphatidylinositol and participates in the first step of GPI biosynthesis. The protein is Phosphatidylinositol N-acetylglucosaminyltransferase subunit C of Homo sapiens (Human).